Consider the following 1774-residue polypeptide: U3 small nucleolar RNA-associated protein 10 (1774 aa).

The interval 1206 to 1226 is disordered; sequence YDKHSSAGSNDEEAGSESEAE. The span at 1215–1226 shows a compositional bias: acidic residues; sequence NDEEAGSESEAE. One copy of the HEAT repeat lies at 1734-1772; sequence LVPIIAELLEDEDEEVEYEVRSGLVKVVESVMGEPFDRY.

The protein belongs to the HEATR1/UTP10 family. Component of the ribosomal small subunit (SSU) processome.

The protein resides in the nucleus. Its subcellular location is the nucleolus. Its function is as follows. Involved in nucleolar processing of pre-18S ribosomal RNA. Involved in ribosome biosynthesis. In Kluyveromyces lactis (strain ATCC 8585 / CBS 2359 / DSM 70799 / NBRC 1267 / NRRL Y-1140 / WM37) (Yeast), this protein is U3 small nucleolar RNA-associated protein 10.